The primary structure comprises 595 residues: Arginine--tRNA ligase (595 aa).

Positions 132-142 (ANPTGPLHVGH) match the 'HIGH' region motif.

The protein belongs to the class-I aminoacyl-tRNA synthetase family. As to quaternary structure, monomer.

The protein localises to the cytoplasm. It carries out the reaction tRNA(Arg) + L-arginine + ATP = L-arginyl-tRNA(Arg) + AMP + diphosphate. The polypeptide is Arginine--tRNA ligase (Cupriavidus taiwanensis (strain DSM 17343 / BCRC 17206 / CCUG 44338 / CIP 107171 / LMG 19424 / R1) (Ralstonia taiwanensis (strain LMG 19424))).